The primary structure comprises 133 residues: Antifungal protein ginkbilobin-like protein 2 (133 aa).

Positions methionine 1–glycine 24 are cleaved as a signal peptide. The Gnk2-homologous domain occupies threonine 28–isoleucine 133. Residue asparagine 36 participates in alpha-D-mannopyranose binding. 2 disulfide bridges follow: cysteine 87-cysteine 96 and cysteine 99-cysteine 124. 2 residues coordinate alpha-D-mannopyranose: arginine 118 and glutamate 129.

Exerts antifungal activity through its carbohydrate-binding specificity. The protein is Antifungal protein ginkbilobin-like protein 2 of Picea glauca (White spruce).